A 75-amino-acid chain; its full sequence is Putative membrane protein insertion efficiency factor (75 aa).

It belongs to the UPF0161 family.

The protein localises to the cell membrane. Could be involved in insertion of integral membrane proteins into the membrane. The protein is Putative membrane protein insertion efficiency factor of Bacillus velezensis (strain DSM 23117 / BGSC 10A6 / LMG 26770 / FZB42) (Bacillus amyloliquefaciens subsp. plantarum).